A 430-amino-acid chain; its full sequence is Immunoglobulin heavy constant delta (430 aa).

Topologically, residues Ala1–Thr406 are extracellular. An Ig-like 1 domain is found at Pro6–Phe98. Residues Cys28 and Cys84 are joined by a disulfide bond. The disordered stretch occupies residues Glu96–Pro167. Polar residues predominate over residues Ala106–Ala118. Residues Ser109 and Ser110 are each glycosylated (O-linked (GalNAc...) serine). Residues Thr113, Thr126, Thr127, Thr131, and Thr132 are each glycosylated (O-linked (GalNAc...) threonine). Over residues Gly138–Thr158 the composition is skewed to basic and acidic residues. Ig-like domains follow at residues Pro175–Ala263 and Pro267–Glu373. 2 cysteine pairs are disulfide-bonded: Cys190–Cys249 and Cys294–Cys355. Asn225, Asn316, and Asn367 each carry an N-linked (GlcNAc...) asparagine glycan. Residues Leu407–Ile427 form a helical membrane-spanning segment. Residues Lys428–Lys430 are Cytoplasmic-facing.

As to quaternary structure, immunoglobulins are composed of two identical heavy chains and two identical light chains; disulfide-linked. An IgD molecule contains thus a delta heavy chain combined with either a kappa or a lambda light chains. Kappa light chains are found predominantly on the membrane IgD (mIgD) form and lambda on the secreted IgD (sIgD) form, this fact is poorly understood. Membrane-bound IgD molecules are non-covalently associated with a heterodimer of CD79A and CD79B.

It localises to the secreted. The protein localises to the cell membrane. Functionally, constant region of immunoglobulin heavy chains. Immunoglobulins, also known as antibodies, are membrane-bound or secreted glycoproteins produced by B lymphocytes. In the recognition phase of humoral immunity, the membrane-bound immunoglobulins serve as receptors which, upon binding of a specific antigen, trigger the clonal expansion and differentiation of B lymphocytes into immunoglobulins-secreting plasma cells. Secreted immunoglobulins mediate the effector phase of humoral immunity, which results in the elimination of bound antigens. The antigen binding site is formed by the variable domain of one heavy chain, together with that of its associated light chain. Thus, each immunoglobulin has two antigen binding sites with remarkable affinity for a particular antigen. The variable domains are assembled by a process called V-(D)-J rearrangement and can then be subjected to somatic hypermutations which, after exposure to antigen and selection, allow affinity maturation for a particular antigen. IgD is the major antigen receptor isotype on the surface of most peripheral B-cells, where it is coexpressed with IgM. The membrane-bound IgD (mIgD) induces the phosphorylation of CD79A and CD79B by the Src family of protein tyrosine kinases. Soluble IgD (sIgD) concentration in serum below those of IgG, IgA, and IgM but much higher than that of IgE. IgM and IgD molecules present on B cells have identical V regions and antigen-binding sites. After the antigen binds to the B-cell receptor, the secreted form sIgD is shut off. IgD is a potent inducer of TNF, IL1B, and IL1RN. IgD also induces release of IL6, IL10, and LIF from peripheral blood mononuclear cells. Monocytes seem to be the main producers of cytokines in vitro in the presence of IgD. This chain is Immunoglobulin heavy constant delta, found in Homo sapiens (Human).